The sequence spans 346 residues: Protein Spea_1705 (346 aa).

Cysteine 101 functions as the Proton acceptor in the catalytic mechanism. Substrate-binding positions include glycine 102–histidine 103, aspartate 262, and glycine 267–threonine 268.

This sequence belongs to the proline racemase family.

It catalyses the reaction trans-3-hydroxy-L-proline = 1-pyrroline-2-carboxylate + H2O. Its function is as follows. In vitro, catalyzes the dehydration of trans-3-hydroxy-L-proline (t3LHyp) to Delta(1)-pyrroline-2-carboxylate (Pyr2C), albeit with very low efficiency. The physiological substrate may be different. Displays neither trans-4-hydroxy-L-proline (t4LHyp) epimerase nor proline racemase activity. The protein is Protein Spea_1705 of Shewanella pealeana (strain ATCC 700345 / ANG-SQ1).